The following is a 233-amino-acid chain: Putative 26S proteasome non-ATPase regulatory subunit 8 homolog B (233 aa).

Residue Met-1 is modified to N-acetylmethionine. One can recognise a PCI domain in the interval 38-217 (DHYLISLSLN…APCKEIPSLQ (180 aa)).

It belongs to the proteasome subunit S14 family. As to quaternary structure, component of the 19S regulatory particle (RP/PA700) lid subcomplex of the 26S proteasome. The 26S proteasome is composed of a core protease (CP), known as the 20S proteasome, capped at one or both ends by the 19S regulatory particle (RP/PA700). The RP/PA700 complex is composed of at least 17 different subunits in two subcomplexes, the base and the lid, which form the portions proximal and distal to the 20S proteolytic core, respectively. Interacts with UCH1 and UCH2.

In terms of biological role, acts as a regulatory subunit of the 26S proteasome which is involved in the ATP-dependent degradation of ubiquitinated proteins. This Arabidopsis thaliana (Mouse-ear cress) protein is Putative 26S proteasome non-ATPase regulatory subunit 8 homolog B.